Consider the following 361-residue polypeptide: CRISPR system associated protein Cas8 (361 aa).

In terms of assembly, monomer. Can form a Cascade complex with Csa5, Cas7, Cas5a, Cas3 and Cas3'.

Functionally, CRISPR (clustered regularly interspaced short palindromic repeat) is an adaptive immune system that provides protection against mobile genetic elements (viruses, transposable elements and conjugative plasmids). CRISPR clusters contain sequences complementary to antecedent mobile elements and target invading nucleic acids. CRISPR clusters are transcribed and processed into CRISPR RNA (crRNA). This chain is CRISPR system associated protein Cas8 (cas8a2), found in Thermoproteus tenax (strain ATCC 35583 / DSM 2078 / JCM 9277 / NBRC 100435 / Kra 1).